A 128-amino-acid polypeptide reads, in one-letter code: Azurin (128 aa).

One can recognise a Plastocyanin-like domain in the interval 1–128 (AECKVTVDST…SMMKGTVTLK (128 aa)). Cys3 and Cys26 form a disulfide bridge. Residues His46, Cys112, His117, and Met121 each contribute to the Cu cation site.

It localises to the periplasm. Transfers electrons from cytochrome c551 to cytochrome oxidase. This Pseudomonas putida (Arthrobacter siderocapsulatus) protein is Azurin.